Consider the following 418-residue polypeptide: CinA-like protein (418 aa).

The protein belongs to the CinA family.

The protein is CinA-like protein of Leptospira interrogans serogroup Icterohaemorrhagiae serovar Lai (strain 56601).